A 128-amino-acid polypeptide reads, in one-letter code: Insulin-like 3 (128 aa).

Positions methionine 1–alanine 15 are cleaved as a signal peptide. Intrachain disulfides connect cysteine 29-cysteine 113, cysteine 41-cysteine 126, and cysteine 112-cysteine 117. Low complexity predominate over residues alanine 81–histidine 94. A disordered region spans residues alanine 81–arginine 101.

This sequence belongs to the insulin family. As to quaternary structure, heterodimer of a B chain and an A chain linked by two disulfide bonds. As to expression, expressed in Leydig cells of the testis, and weakly in the theca interna cells of antral follicles and the corpus luteum of the ovary.

It localises to the secreted. In terms of biological role, seems to play a role in testicular function. May be a trophic hormone with a role in testicular descent in fetal life. Is a ligand for LGR8 receptor. The polypeptide is Insulin-like 3 (Insl3) (Rattus norvegicus (Rat)).